The following is a 630-amino-acid chain: Glutamyl-tRNA(Gln) amidotransferase subunit E (630 aa).

The protein belongs to the GatB/GatE family. GatE subfamily. As to quaternary structure, heterodimer of GatD and GatE.

The catalysed reaction is L-glutamyl-tRNA(Gln) + L-glutamine + ATP + H2O = L-glutaminyl-tRNA(Gln) + L-glutamate + ADP + phosphate + H(+). Allows the formation of correctly charged Gln-tRNA(Gln) through the transamidation of misacylated Glu-tRNA(Gln) in organisms which lack glutaminyl-tRNA synthetase. The reaction takes place in the presence of glutamine and ATP through an activated gamma-phospho-Glu-tRNA(Gln). The GatDE system is specific for glutamate and does not act on aspartate. The sequence is that of Glutamyl-tRNA(Gln) amidotransferase subunit E from Methanocaldococcus jannaschii (strain ATCC 43067 / DSM 2661 / JAL-1 / JCM 10045 / NBRC 100440) (Methanococcus jannaschii).